Reading from the N-terminus, the 869-residue chain is Bifunctional uridylyltransferase/uridylyl-removing enzyme (869 aa).

Positions 1-332 (MTDAPAERPD…QFDGEATPES (332 aa)) are uridylyltransferase. A uridylyl-removing region spans residues 333 to 691 (LGGGFSLRRG…RRAVPDNDAL (359 aa)). An HD domain is found at 450-572 (VDQHTLMVLR…VGTRERLDYL (123 aa)). ACT domains are found at residues 692–774 (EVFV…RAVP) and 798–869 (RISL…LDPV).

It belongs to the GlnD family. Requires Mg(2+) as cofactor.

The enzyme catalyses [protein-PII]-L-tyrosine + UTP = [protein-PII]-uridylyl-L-tyrosine + diphosphate. It carries out the reaction [protein-PII]-uridylyl-L-tyrosine + H2O = [protein-PII]-L-tyrosine + UMP + H(+). Uridylyltransferase (UTase) activity is inhibited by glutamine, while glutamine activates uridylyl-removing (UR) activity. Functionally, modifies, by uridylylation and deuridylylation, the PII regulatory proteins (GlnB and homologs), in response to the nitrogen status of the cell that GlnD senses through the glutamine level. Under low glutamine levels, catalyzes the conversion of the PII proteins and UTP to PII-UMP and PPi, while under higher glutamine levels, GlnD hydrolyzes PII-UMP to PII and UMP (deuridylylation). Thus, controls uridylylation state and activity of the PII proteins, and plays an important role in the regulation of nitrogen assimilation and metabolism. This Xanthomonas oryzae pv. oryzae (strain MAFF 311018) protein is Bifunctional uridylyltransferase/uridylyl-removing enzyme.